Here is a 168-residue protein sequence, read N- to C-terminus: uncharacterized protein (168 aa).

Residues 1–10 (MSPTTGPQPN) show a composition bias toward pro residues. Disordered stretches follow at residues 1 to 23 (MSPT…TGPQ) and 117 to 143 (EPGN…RGPQ).

This is an uncharacterized protein from Homo sapiens (Human).